An 899-amino-acid chain; its full sequence is Suppressor of glycerol defect protein 1 (899 aa).

Residues 24 to 33 show a composition bias toward basic and acidic residues; that stretch reads QDERFSISEG. 2 disordered regions span residues 24–181 and 248–326; these read QDER…VSYP and ETNS…DDSE. The segment covering 34–49 has biased composition (basic residues); the sequence is KKRRRGNGKHLSRKEK. Residues 65 to 77 show a composition bias toward polar residues; it reads REINSSRLKSAPT. Residues 103–126 show a composition bias toward acidic residues; that stretch reads DESESNENWDSDEVLTDEVAEESG. Basic and acidic residues-rich tracts occupy residues 134 to 143, 162 to 174, and 251 to 264; these read ETMKKLESLK, SYEK…RDTN, and SMRK…KAFS. Positions 265-292 are enriched in acidic residues; that stretch reads SDDDLSASDFEDSDGLSESDNDSVADSD. An MIF4G domain is found at 335–540; that stretch reads SKKVNSSLNK…DTMSDLKNNR (206 aa). The region spanning 644–781 is the MI domain; sequence DIRRAIFISI…KLDVFKHVPF (138 aa). A Phosphoserine modification is found at Ser-736.

Belongs to the CWC22 family. In terms of assembly, interacts with PLC1.

The protein resides in the nucleus. It localises to the nucleolus. Its function is as follows. Involved in osmoregulatory glycerol response, probably through its interaction with PLC1 which regulates the expression of GDP1. This Saccharomyces cerevisiae (strain ATCC 204508 / S288c) (Baker's yeast) protein is Suppressor of glycerol defect protein 1 (SGD1).